The chain runs to 247 residues: Homeobox protein BarH-like 1b (247 aa).

2 disordered regions span residues 118–138 (RGKL…GRRS) and 197–247 (GGGL…SQEE). Positions 135-194 (GRRSRTVFTELQLMGLEKRFEKQKYLSTPDRIDLAESLGLSQLQVKTWYQNRRMKWKKIV) form a DNA-binding region, homeobox. Residues 223-234 (EQERARDAEKPP) are compositionally biased toward basic and acidic residues.

The protein belongs to the BAR homeobox family. Interacts with serum response factor (SRF). As to expression, expressed in smooth muscle cells of the upper digestive organs and their attached arteries and to craniofacial structures.

It is found in the nucleus. Its function is as follows. Transcription factor which is involved with the serum response factor (SRF) in the smooth muscle cell-specific transcription of the beta-tropomyosin gene in the upper digestive organs and their attached arteries. In Gallus gallus (Chicken), this protein is Homeobox protein BarH-like 1b (BARX1B).